Reading from the N-terminus, the 323-residue chain is Sphingolipid delta(4)-desaturase DES1 (323 aa).

Gly-2 carries N-myristoyl glycine lipidation. Helical transmembrane passes span Pro-41–Val-61 and Trp-68–Ile-88. The short motif at His-89–His-93 is the Histidine box-1 element. Residues Trp-107 to Tyr-127 form a helical membrane-spanning segment. The Histidine box-2 signature appears at His-128–His-132. The next 3 membrane-spanning stretches (helical) occupy residues Phe-152 to Phe-172, Tyr-184 to Leu-204, and Leu-209 to Phe-229. The short motif at His-259 to His-263 is the Histidine box-3 element. Phosphoserine is present on Ser-307.

The protein belongs to the fatty acid desaturase type 1 family. DEGS subfamily. As to quaternary structure, interacts with RLBP1; the interaction increases synthesis of chromophore-precursors by DEGS1. Post-translationally, myristoylation can target the enzyme to the mitochondria leading to an increase in ceramide levels.

The protein localises to the mitochondrion membrane. It localises to the endoplasmic reticulum membrane. The enzyme catalyses an N-acylsphinganine + 2 Fe(II)-[cytochrome b5] + O2 + 2 H(+) = an N-acylsphing-4-enine + 2 Fe(III)-[cytochrome b5] + 2 H2O. The catalysed reaction is all-trans-retinol = 11-cis-retinol. It carries out the reaction all-trans-retinol = 9-cis-retinol. It catalyses the reaction all-trans-retinol = 13-cis-retinol. The enzyme catalyses 11-cis-retinol = 13-cis-retinol. The catalysed reaction is 11-cis-retinol = 9-cis-retinol. Has sphingolipid-delta-4-desaturase activity. Converts D-erythro-sphinganine to D-erythro-sphingosine (E-sphing-4-enine). Catalyzes the equilibrium isomerization of retinols. The polypeptide is Sphingolipid delta(4)-desaturase DES1 (DEGS1) (Pongo abelii (Sumatran orangutan)).